The sequence spans 750 residues: Photosystem I P700 chlorophyll a apoprotein A1 (750 aa).

A run of 8 helical transmembrane segments spans residues 70-93 (VFSA…FHGA), 156-179 (LYCT…FHYH), 195-219 (LNHH…HVSL), 291-309 (IAHH…GHMY), 346-369 (WHAQ…HHMY), 385-411 (LSLF…IFMV), 433-455 (AIIS…LYIH), and 531-549 (FLVH…LILL). [4Fe-4S] cluster contacts are provided by Cys573 and Cys582. 2 consecutive transmembrane segments (helical) span residues 589-610 (HVFL…HFSW) and 664-686 (LSAY…MFLF). A chlorophyll a'-binding site is contributed by His675. Chlorophyll a contacts are provided by Met683 and Tyr691. Trp692 contributes to the phylloquinone binding site. Residues 724-744 (AVGVTHYLLGGIATTWAFFLA) form a helical membrane-spanning segment.

Belongs to the PsaA/PsaB family. In terms of assembly, the PsaA/B heterodimer binds the P700 chlorophyll special pair and subsequent electron acceptors. PSI consists of a core antenna complex that captures photons, and an electron transfer chain that converts photonic excitation into a charge separation. The eukaryotic PSI reaction center is composed of at least 11 subunits. Requires P700 is a chlorophyll a/chlorophyll a' dimer, A0 is one or more chlorophyll a, A1 is one or both phylloquinones and FX is a shared 4Fe-4S iron-sulfur center. as cofactor.

It localises to the plastid. Its subcellular location is the chloroplast thylakoid membrane. The catalysed reaction is reduced [plastocyanin] + hnu + oxidized [2Fe-2S]-[ferredoxin] = oxidized [plastocyanin] + reduced [2Fe-2S]-[ferredoxin]. Its function is as follows. PsaA and PsaB bind P700, the primary electron donor of photosystem I (PSI), as well as the electron acceptors A0, A1 and FX. PSI is a plastocyanin-ferredoxin oxidoreductase, converting photonic excitation into a charge separation, which transfers an electron from the donor P700 chlorophyll pair to the spectroscopically characterized acceptors A0, A1, FX, FA and FB in turn. Oxidized P700 is reduced on the lumenal side of the thylakoid membrane by plastocyanin. The chain is Photosystem I P700 chlorophyll a apoprotein A1 from Daucus carota (Wild carrot).